A 198-amino-acid chain; its full sequence is NADH-quinone oxidoreductase subunit I (198 aa).

4Fe-4S ferredoxin-type domains lie at 42–72 (LNRWPDGLEKCVGCELCAWACPADAIYVEGA) and 88–117 (RVYEINYLRCILCGMCIEACPTRALTMTND). Residues Cys-52, Cys-55, Cys-58, Cys-62, Cys-97, Cys-100, Cys-103, and Cys-107 each contribute to the [4Fe-4S] cluster site. Positions 137–198 (APLKEGMEQP…DTQHKDEEAA (62 aa)) are disordered. Basic and acidic residues predominate over residues 182 to 198 (AHRDDDNDTQHKDEEAA).

It belongs to the complex I 23 kDa subunit family. NDH-1 is composed of 14 different subunits. Subunits NuoA, H, J, K, L, M, N constitute the membrane sector of the complex. It depends on [4Fe-4S] cluster as a cofactor.

The protein resides in the cell membrane. The enzyme catalyses a quinone + NADH + 5 H(+)(in) = a quinol + NAD(+) + 4 H(+)(out). In terms of biological role, NDH-1 shuttles electrons from NADH, via FMN and iron-sulfur (Fe-S) centers, to quinones in the respiratory chain. The immediate electron acceptor for the enzyme in this species is believed to be ubiquinone. Couples the redox reaction to proton translocation (for every two electrons transferred, four hydrogen ions are translocated across the cytoplasmic membrane), and thus conserves the redox energy in a proton gradient. This chain is NADH-quinone oxidoreductase subunit I, found in Cutibacterium acnes (strain DSM 16379 / KPA171202) (Propionibacterium acnes).